The primary structure comprises 161 residues: Cyclic pyranopterin monophosphate synthase (161 aa).

Substrate is bound by residues 75-77 (LCH) and 113-114 (ME). Asp-128 is an active-site residue.

The protein belongs to the MoaC family. As to quaternary structure, homohexamer; trimer of dimers.

The enzyme catalyses (8S)-3',8-cyclo-7,8-dihydroguanosine 5'-triphosphate = cyclic pyranopterin phosphate + diphosphate. It participates in cofactor biosynthesis; molybdopterin biosynthesis. In terms of biological role, catalyzes the conversion of (8S)-3',8-cyclo-7,8-dihydroguanosine 5'-triphosphate to cyclic pyranopterin monophosphate (cPMP). The sequence is that of Cyclic pyranopterin monophosphate synthase from Salmonella arizonae (strain ATCC BAA-731 / CDC346-86 / RSK2980).